The following is a 214-amino-acid chain: CASP-like protein 3A1 (214 aa).

The Cytoplasmic segment spans residues 1 to 49 (MTNGQKIEVAVQLPESKVAATENNETMSGPLVVGGGVAKPFGRKADVMH). The chain crosses the membrane as a helical span at residues 50-70 (VILRLLCTITSVTAVSFMVTA). Residues 71–96 (HQSSTVSIYGFMLPVRSKWSFSHSFE) are Extracellular-facing. Residues 97–117 (YLVGVSAAVAAHSLLQLLISM) traverse the membrane as a helical segment. At 118-132 (SRLLRKSPVIPSRSH) the chain is on the cytoplasmic side. A helical transmembrane segment spans residues 133-153 (AWLIFAGDQVFAYAMISAGAA). Residues 154–182 (ASGVTNLNRTGIQHTALPNFCKPLNYFCN) are Extracellular-facing. A glycan (N-linked (GlcNAc...) asparagine) is linked at Asn-161. A helical membrane pass occupies residues 183–203 (HVAVSIAFAFISCLLLAALAV). Residues 204–214 (QEVIWLSKSKY) lie on the Cytoplasmic side of the membrane.

It belongs to the Casparian strip membrane proteins (CASP) family. As to quaternary structure, homodimer and heterodimers.

It is found in the cell membrane. The polypeptide is CASP-like protein 3A1 (Ricinus communis (Castor bean)).